The chain runs to 323 residues: Fructose-bisphosphate aldolase (323 aa).

Ser-50 contacts beta-D-fructose 1,6-bisphosphate. Asp-83 (proton donor) is an active-site residue. The Zn(2+) site is built by His-84 and His-178. Beta-D-fructose 1,6-bisphosphate is bound by residues His-178, Gly-179, and Lys-182. Residue His-210 coordinates Zn(2+). Beta-D-fructose 1,6-bisphosphate is bound by residues Gly-211, Ser-213, Asn-253, Asp-255, Ser-256, Arg-259, and Arg-280.

It belongs to the class II fructose-bisphosphate aldolase family. In terms of assembly, homodimer. Requires Zn(2+) as cofactor.

The catalysed reaction is beta-D-fructose 1,6-bisphosphate = D-glyceraldehyde 3-phosphate + dihydroxyacetone phosphate. Its pathway is carbohydrate degradation; glycolysis; D-glyceraldehyde 3-phosphate and glycerone phosphate from D-glucose: step 4/4. In terms of biological role, plays a key role in glycolysis by catalyzing the cleavage of fructose 1,6-bisphosphate into dihydroxyacetone phosphate and glyceraldehyde 3-phosphate. Does not cleave D-tagatose-1,6-bisphosphate. The polypeptide is Fructose-bisphosphate aldolase (Giardia intestinalis (strain ATCC 50803 / WB clone C6) (Giardia lamblia)).